The primary structure comprises 130 residues: Small ribosomal subunit protein uS8 (130 aa).

It belongs to the universal ribosomal protein uS8 family. Part of the 30S ribosomal subunit.

In terms of biological role, one of the primary rRNA binding proteins, it binds directly to 16S rRNA central domain where it helps coordinate assembly of the platform of the 30S subunit. This Methanothermococcus thermolithotrophicus (Methanococcus thermolithotrophicus) protein is Small ribosomal subunit protein uS8.